The following is a 181-amino-acid chain: Reverse rubrerythrin-1 (181 aa).

The region spanning 1–35 (MKKFKCVVCGYIYTGEDAPEKCPVCGAGKDKFVEV) is the Rubredoxin-like domain. The Fe cation site is built by Cys6, Cys9, Cys22, Cys25, Glu69, Glu102, Glu132, Glu165, and His168. Residues 52-181 (KGVDKEVLEG…FRGLLNRYFK (130 aa)) enclose the Ferritin-like diiron domain.

Homodimer. Fe(3+) serves as cofactor.

The enzyme catalyses H2O2 + NADH + H(+) = NAD(+) + 2 H2O. Its function is as follows. Functions as the terminal component of an NADH peroxidase (NADH:H(2)O(2) oxidoreductase) when using NADH:rubredoxin oxidoreductase (NROR) and rubredoxin (Rd) as electron transport intermediaries from NADH to revRbr 1. Plays an important role in the oxidative stress defense system in C.acetobutylicum, an obligate anaerobic bacterium. Also exhibits NADH oxidase (NADH:O(2) oxidoreductase) activity in vitro, which is 100-fold lesser than that of FprA1/2 using the same electron transfer components. Therefore, its predominant function is most likely as a scavenger of its preferred substrate, H(2)O(2). The polypeptide is Reverse rubrerythrin-1 (rbr3A) (Clostridium acetobutylicum (strain ATCC 824 / DSM 792 / JCM 1419 / IAM 19013 / LMG 5710 / NBRC 13948 / NRRL B-527 / VKM B-1787 / 2291 / W)).